The chain runs to 444 residues: Transcriptional coactivator nsrH (444 aa).

Positions 74 to 144 (ASQVSEILAC…ERDHVAHTPL (71 aa)) constitute an HTH iclR-type domain. The H-T-H motif DNA-binding region spans 104–123 (IKDIADLTNVPESRLRRIIR).

It is found in the nucleus. Transcriptional coactivator; part of the gene cluster that mediates the biosynthesis of the tetrahydroxanthone dimer neosartorin, which exhibits antibacterial activity. The sequence is that of Transcriptional coactivator nsrH from Aspergillus novofumigatus (strain IBT 16806).